A 227-amino-acid polypeptide reads, in one-letter code: NAD(P)H-quinone oxidoreductase subunit K, chloroplastic (227 aa).

Residues Cys43, Cys44, Cys108, and Cys139 each contribute to the [4Fe-4S] cluster site.

Belongs to the complex I 20 kDa subunit family. As to quaternary structure, NDH is composed of at least 16 different subunits, 5 of which are encoded in the nucleus. Requires [4Fe-4S] cluster as cofactor.

The protein localises to the plastid. The protein resides in the chloroplast thylakoid membrane. The enzyme catalyses a plastoquinone + NADH + (n+1) H(+)(in) = a plastoquinol + NAD(+) + n H(+)(out). It catalyses the reaction a plastoquinone + NADPH + (n+1) H(+)(in) = a plastoquinol + NADP(+) + n H(+)(out). In terms of biological role, NDH shuttles electrons from NAD(P)H:plastoquinone, via FMN and iron-sulfur (Fe-S) centers, to quinones in the photosynthetic chain and possibly in a chloroplast respiratory chain. It has NADH- and deamino-NADH-specific dehydrogenase activity, using ferricyanide or quinones as acceptors. The immediate electron acceptor for the enzyme in this species is believed to be plastoquinone. Couples the redox reaction to proton translocation, and thus conserves the redox energy in a proton gradient. The protein is NAD(P)H-quinone oxidoreductase subunit K, chloroplastic of Pisum sativum (Garden pea).